The sequence spans 554 residues: Sesquithujene synthase A (554 aa).

Asp308 and Asp312 together coordinate Mg(2+). Positions 308 and 312 each coordinate substrate. Residues 308-312 carry the DDXXD motif motif; it reads DDMFD. Positions 407–411 are determine the stereoselectivity of the enzyme; that stretch reads SIGAN. Substrate is bound by residues Arg449 and Asn452. Mg(2+) is bound by residues Asn452, Ser456, and Glu460.

It belongs to the terpene synthase family. Monomer. It depends on Mg(2+) as a cofactor. Requires Mn(2+) as cofactor. Highly expressed in the husk. Detected in leaves.

Its subcellular location is the cytoplasm. It catalyses the reaction (2E,6E)-farnesyl diphosphate = sesquithujene + diphosphate. The enzyme catalyses (2Z,6Z)-farnesyl diphosphate = (1S,5S,6S)-alpha-bergamotene + diphosphate. It carries out the reaction (2E,6E)-farnesyl diphosphate = (E)-beta-farnesene + diphosphate. The catalysed reaction is (2E,6E)-farnesyl diphosphate = (S)-beta-bisabolene + diphosphate. It catalyses the reaction (2Z,6E)-farnesyl diphosphate = (-)-beta-curcumene + diphosphate. The enzyme catalyses (2E,6E)-farnesyl diphosphate = gamma-curcumene + diphosphate. It carries out the reaction (2E,6E)-farnesyl diphosphate = sesquisabinene B + diphosphate. It participates in secondary metabolite biosynthesis; terpenoid biosynthesis. Its function is as follows. Sesquiterpene synthase involved in the production after herbivore attack of a blend of volatiles that attracts natural enemies of herbivores. Converts farnesyl diphosphate to sesquithujene, (S)-beta-bisabolene, (Z)-alpha-bergamotene, sesquisabinene B and several minor products. Can also act in vitro as a monoterpene synthase, converting geranyl diphosphate to (S)-(-)-limonene, beta-myrcene and 11 other monoterpenes. In Zea mays (Maize), this protein is Sesquithujene synthase A.